The sequence spans 626 residues: Myelin-associated glycoprotein (626 aa).

The first 19 residues, 1 to 19 (MIFLTTLPLFWIMISASRG), serve as a signal peptide directing secretion. Residues 20–325 (GHWGAWMPSS…RTVELSVMYA (306 aa)) form an interaction with RTN4R and RTN4RL2 region. Over 20-516 (GHWGAWMPSS…HRLMWAKIGP (497 aa)) the chain is Extracellular. Residues 22-120 (WGAWMPSSIS…LGGKYYFRGD (99 aa)) form the Ig-like V-type domain. Cystine bridges form between Cys-37–Cys-165, Cys-42–Cys-100, and Cys-159–Cys-217. Residue 65–67 (YPK) coordinates a ganglioside GT1b (d18:1(4E)). The N-linked (GlcNAc...) asparagine glycan is linked to Asn-99. Residues Arg-118 and 124 to 128 (YNQYT) contribute to the a ganglioside GT1b (d18:1(4E)) site. 4 consecutive Ig-like C2-type domains span residues 139–237 (NTPN…LDVK), 241–325 (VIVE…VMYA), 327–412 (WKPT…VEFA), and 413–508 (PIIL…GAHR). N-linked (GlcNAc...) asparagine glycans are attached at residues Asn-223 and Asn-246. A disulfide bridge connects residues Cys-261 and Cys-305. N-linked (GlcNAc...) asparagine glycans are attached at residues Asn-315 and Asn-332. Cys-347 and Cys-392 are disulfide-bonded. Asn-406 is a glycosylation site (N-linked (GlcNAc...) asparagine). 2 cysteine pairs are disulfide-bonded: Cys-421–Cys-430 and Cys-432–Cys-488. N-linked (GlcNAc...) asparagine glycosylation is found at Asn-450 and Asn-454. The helical transmembrane segment at 517–536 (VGAVVAFAILIAIVCYITQT) threads the bilayer. Cys-531 carries S-palmitoyl cysteine lipidation. Topologically, residues 537–626 (RRKKNVTESP…LAEYAEIRVK (90 aa)) are cytoplasmic. Residues Ser-545, Ser-547, and Ser-549 each carry the phosphoserine modification. The tract at residues 577–626 (LGSERRLLGLRGEPPELDLSYSHSDLGKRPTKDSYTLTEELAEYAEIRVK) is required for normal axon myelination in the central nervous system. The disordered stretch occupies residues 581–608 (RRLLGLRGEPPELDLSYSHSDLGKRPTK).

This sequence belongs to the immunoglobulin superfamily. SIGLEC (sialic acid binding Ig-like lectin) family. In terms of assembly, monomer and homodimer. Interacts (via the first three N-terminal Ig-like domains) with RTN4R and RTN4RL2. Interacts with isoform 2 of BSG. In terms of processing, N-glycosylated. Phosphorylated on tyrosine residues. Post-translationally, ubiquitinated, leading to proteasomal degradation. Detected in myelin. Detected in olfactory bulb and throughout the brain (at protein level). Detected in brain.

Its subcellular location is the cell membrane. The protein localises to the membrane raft. Adhesion molecule that mediates interactions between myelinating cells and neurons by binding to neuronal sialic acid-containing gangliosides and to the glycoproteins RTN4R and RTN4RL2. Not required for initial myelination, but seems to play a role in the maintenance of normal axon myelination. Protects motoneurons against apoptosis, also after injury; protection against apoptosis is probably mediated via interaction with neuronal RTN4R and RTN4RL2. Required to prevent degeneration of myelinated axons in adults; this probably depends on binding to gangliosides on the axon cell membrane. Negative regulator of neurite outgrowth; in dorsal root ganglion neurons the inhibition is mediated primarily via binding to neuronal RTN4R or RTN4RL2 and to a lesser degree via binding to neuronal gangliosides. In cerebellar granule cells the inhibition is mediated primarily via binding to neuronal gangliosides. In sensory neurons, inhibition of neurite extension depends only partially on RTN4R, RTN4RL2 and gangliosides. Inhibits axon longitudinal growth. Inhibits axon outgrowth by binding to RTN4R. Preferentially binds to alpha-2,3-linked sialic acid. Binds ganglioside Gt1b. This is Myelin-associated glycoprotein (Mag) from Rattus norvegicus (Rat).